We begin with the raw amino-acid sequence, 549 residues long: MWLCALVWASLAVCPIWGHPSSPPVVDTTKGKVLGKYVSLEGFTQPVAVFLGVPFAKPPLGSLRFAPPEPAEPWSFVKNTTTYPPMCSQDGVVGKLLADMLSTGKESIPLEFSEDCLYLNIYSPADLTKNSRLPVMVWIHGGGLIIGGASPYSGLALSAHENVVVVTIQYRLGIWGLFSTGDEHSRGNWAHLDQLAALRWVQDNIANFGGNPDSVTIFGESAGGVSVSALVLSPLAKNLFHRAISESGVVLTTNLDKKNTQAVAQMIATLSGCNNTSSAAMVQCLRQKTEAELLELTVKLDNTSMSTVIDGVVLPKTPEEILTEKSFNTVPYIVGFNKQEFGWIIPTMMGNLLSEGRMNEKMASSFLKRFSPNLNISESVIPAIIEKYLRGTDDPAKKKELLLDMFSDVFFGIPAVLMSRSLRDAGAPTYMYEFQYRPSFVSDQRPQTVQGDHGDEIFSVFGTPFLKEGASEEETNLSKLVMKFWANFARNGNPNGEGLPHWPKYDQKEGYLQIGATTQQAQKLKGEEVAFWTELLAKNPPQTEHTEHT.

Positions 1 to 18 (MWLCALVWASLAVCPIWG) are cleaved as a signal peptide. A glycan (N-linked (GlcNAc...) asparagine) is linked at N79. C87 and C116 form a disulfide bridge. Catalysis depends on S221, which acts as the Acyl-ester intermediate. Residues C273 and C284 are joined by a disulfide bond. N-linked (GlcNAc...) asparagine glycosylation is found at N274, N275, and N302. Catalysis depends on E340, which acts as the Charge relay system. An N-linked (GlcNAc...) asparagine glycan is attached at N375. The active-site Charge relay system is H453. Phosphoserine is present on S471. N-linked (GlcNAc...) asparagine glycosylation occurs at N476. The short motif at 546 to 549 (TEHT) is the Prevents secretion from ER element.

This sequence belongs to the type-B carboxylesterase/lipase family.

The protein resides in the endoplasmic reticulum lumen. It carries out the reaction a carboxylic ester + H2O = an alcohol + a carboxylate + H(+). Functionally, involved in the detoxification of xenobiotics and in the activation of ester and amide prodrugs. Involved in the extracellular metabolism of lung surfactant. The chain is Carboxylesterase 1C (Ces1c) from Rattus norvegicus (Rat).